The primary structure comprises 2177 residues: Protein sidekick-2 (2177 aa).

An N-terminal signal peptide occupies residues 1–26; sequence MKGLGVPAAALLWGGLSALLPPSLPA. The Extracellular segment spans residues 27-1937; the sequence is DDVSPYFKTE…ANPFYEEWWF (1911 aa). 6 consecutive Ig-like C2-type domains span residues 31–113, 118–205, 220–299, 313–401, 407–496, and 501–590; these read PYFK…TEVQ, GSFE…QPIT, PTII…SSVP, PQFV…TYLA, PNIT…ADLV, and TRIT…AHLR. A disulfide bond links Cys53 and Cys96. N-linked (GlcNAc...) asparagine glycans are attached at residues Asn198 and Asn228. 2 cysteine pairs are disulfide-bonded: Cys242/Cys289 and Cys335/Cys385. The N-linked (GlcNAc...) asparagine glycan is linked to Asn408. Disulfide bonds link Cys428–Cys480 and Cys522–Cys574. N-linked (GlcNAc...) asparagine glycosylation is found at Asn582, Asn614, Asn709, Asn748, Asn809, Asn941, and Asn953. 13 consecutive Fibronectin type-III domains span residues 597 to 693, 698 to 794, 799 to 898, 902 to 996, 1000 to 1099, 1104 to 1202, 1207 to 1304, 1305 to 1402, 1407 to 1504, 1509 to 1626, 1631 to 1727, 1731 to 1826, and 1829 to 1928; these read APES…LPEE, PPQN…TLQG, PPGN…THED, PVGH…VPPE, APTN…TLQA, APAN…TRES, GPSN…TLDD, VPGP…TEKR, PPSK…TLQA, APTI…VGEA, APQN…TQQA, APGS…TGPG, and APGP…AQKA. N-linked (GlcNAc...) asparagine glycosylation is found at Asn1107, Asn1210, Asn1261, Asn1346, Asn1462, Asn1580, Asn1593, Asn1675, Asn1694, Asn1746, and Asn1820. Residues 1938-1958 form a helical membrane-spanning segment; that stretch reads LVVIALVGLIFILLLVFVLII. The Cytoplasmic portion of the chain corresponds to 1959 to 2177; sequence RGQSKKYAKK…APIGGFSSFV (219 aa). Disordered regions lie at residues 2044–2071 and 2103–2177; these read AESSSLTEKPSEVSDSQGSDSEYEVDPA and QAYS…SSFV. Composition is skewed to polar residues over residues 2045–2063 and 2119–2130; these read ESSSLTEKPSEVSDSQGSD and PLSNSTSTQQGS. The span at 2142 to 2151 shows a compositional bias: pro residues; that stretch reads PQTPGNPPSQ. Positions 2171 to 2177 match the PDZ-binding motif; the sequence is GGFSSFV.

The protein belongs to the sidekick family. Homodimer; mediates homophilic interactions to promote cell adhesion. Expressed by non-overlapping subsets of retinal neurons. SDK1, SDK2, DSCAM and DSCAML1 are expressed in non-overlapping subsets of interneurons and retinal ganglion cells (RGCs) that form synapses in distinct inner plexiform layer (IPL) sublaminae.

Its subcellular location is the cell membrane. The protein localises to the synapse. In terms of biological role, adhesion molecule that promotes lamina-specific synaptic connections in the retina. Expressed in specific subsets of interneurons and retinal ganglion cells (RGCs) and promotes synaptic connectivity via homophilic interactions. The protein is Protein sidekick-2 of Gallus gallus (Chicken).